Here is a 244-residue protein sequence, read N- to C-terminus: 5'-deoxynucleotidase (244 aa).

The catalysed reaction is a 2'-deoxyribonucleoside 5'-phosphate + H2O = a 2'-deoxyribonucleoside + phosphate. Following host DNA degradation, is responsible for the degradation of 5'-dNMP's to deoxynucleosides that can be further excreted. Active on deoxynucleoside 5'-monophosphates but not active as a phosphatase on ribonucleotides, deoxynucleoside 5'-triphosphates, deoxynucleoside 3'-monophosphates, or deoxyoligonucleotides. The protein is 5'-deoxynucleotidase (dmp) of Escherichia coli (Enterobacteria phage T5).